Here is a 595-residue protein sequence, read N- to C-terminus: Beta-lactamase-like protein ARB_00930 (595 aa).

The first 18 residues, 1–18 (MVVCFLWLLLPYAATTLS), serve as a signal peptide directing secretion. N-linked (GlcNAc...) asparagine glycosylation is found at Asn70 and Asn102. Catalysis depends on Ser117, which acts as the Acyl-ester intermediate. N-linked (GlcNAc...) asparagine glycans are attached at residues Asn147, Asn156, and Asn195. Tyr235 serves as the catalytic Proton acceptor. Asn249, Asn461, and Asn473 each carry an N-linked (GlcNAc...) asparagine glycan.

It belongs to the beta-lactamase family.

The protein localises to the secreted. The catalysed reaction is a beta-lactam + H2O = a substituted beta-amino acid. The chain is Beta-lactamase-like protein ARB_00930 from Arthroderma benhamiae (strain ATCC MYA-4681 / CBS 112371) (Trichophyton mentagrophytes).